Reading from the N-terminus, the 503-residue chain is Cobyric acid synthase (503 aa).

Residues 255 to 444 (DIDIAVIRYP…FHDLFHNDAF (190 aa)) enclose the GATase cobBQ-type domain. The active-site Nucleophile is the Cys337. His436 is an active-site residue.

This sequence belongs to the CobB/CobQ family. CobQ subfamily.

It participates in cofactor biosynthesis; adenosylcobalamin biosynthesis. Catalyzes amidations at positions B, D, E, and G on adenosylcobyrinic A,C-diamide. NH(2) groups are provided by glutamine, and one molecule of ATP is hydrogenolyzed for each amidation. This chain is Cobyric acid synthase, found in Geobacillus sp. (strain WCH70).